A 501-amino-acid chain; its full sequence is Iroquois-class homeodomain protein IRX-3 (501 aa).

Positions 125-188 (FGDPSRPKNA…ANARRRLKKE (64 aa)) form a DNA-binding region, homeobox; TALE-type. Positions 190 to 381 (KMTWAPRSRT…SPPGAAVAPS (192 aa)) are disordered. Composition is skewed to acidic residues over residues 210 to 220 (REEEDEEEDEE) and 227 to 258 (ELEEEELGGEEEDTGGEGLADDDEDEEIDLEN). 2 positions are modified to phosphoserine: Ser323 and Ser326. A compositionally biased stretch (pro residues) spans 324 to 339 (LPSPPVSLDPCAPAPA).

This sequence belongs to the TALE/IRO homeobox family.

It is found in the nucleus. Transcription factor involved in SHH-dependent neural patterning. Together with NKX2-2 and NKX6-1 acts to restrict the generation of motor neurons to the appropriate region of the neural tube. Belongs to the class I proteins of neuronal progenitor factors, which are repressed by SHH signals. Involved in the transcriptional repression of MNX1 in non-motor neuron cells. Acts as a regulator of energy metabolism. This chain is Iroquois-class homeodomain protein IRX-3 (IRX3), found in Homo sapiens (Human).